The sequence spans 193 residues: Cysteine and glycine-rich protein 1 (193 aa).

An LIM zinc-binding 1 domain is found at 10-61 (CGVCQKTVYFAEEVQCEGSSFHKSCFLCLVCKKNLDSTTVAVHGEEIYCKSC). Residues 64–69 (KKYGPK) carry the Nuclear localization signal motif. S81 carries the phosphoserine modification. Residues K84, K112, K131, K137, and K161 each carry the N6-acetyllysine modification. The 52-residue stretch at 119 to 170 (CPRCSQAVYAAEKVIGAGKSWHKSCFRCAKCGKGLESTTLADKDGEIYCKGC) folds into the LIM zinc-binding 2 domain. A Phosphoserine modification is found at S192.

In terms of assembly, interacts with ASCC1; ASCC2 and TRIP4.

The protein resides in the nucleus. In terms of biological role, could play a role in neuronal development. This Bos taurus (Bovine) protein is Cysteine and glycine-rich protein 1 (CSRP1).